The following is a 531-amino-acid chain: Basal body-orientation factor 1 (531 aa).

Positions 1-19 are enriched in basic residues; sequence MPKLKVKAGKGKKGKRKKA. The interval 1–32 is disordered; sequence MPKLKVKAGKGKKGKRKKAGKNEHRLDKESEV. Positions 20-32 are enriched in basic and acidic residues; the sequence is GKNEHRLDKESEV. Coiled coils occupy residues 26-213 and 274-365; these read LDKE…AEKA and VQEK…VESF. Positions 465–505 are disordered; sequence QSRKSPGLKPSPPADVSSIKEKEINTSNLEEKPEESSSTFI. Positions 482–499 are enriched in basic and acidic residues; it reads SIKEKEINTSNLEEKPEE.

This sequence belongs to the BBOF1 family. As to expression, multiciliated cells.

The protein localises to the cytoplasm. It localises to the cytoskeleton. It is found in the cilium basal body. Its function is as follows. Basal body protein required in multiciliate cells to align and maintain cilia orientation in response to flow. May act by mediating a maturation step that stabilizes and aligns cilia orientation. Not required to respond to planar cell polarity (PCP) or flow-based orientation cues. The chain is Basal body-orientation factor 1 (ccdc176) from Xenopus laevis (African clawed frog).